We begin with the raw amino-acid sequence, 286 residues long: uncharacterized protein (286 aa).

One can recognise a Radical SAM core domain in the interval E36–K256. Residues C50, C54, and C57 each coordinate [4Fe-4S] cluster.

[4Fe-4S] cluster is required as a cofactor.

This is an uncharacterized protein from Methanocaldococcus jannaschii (strain ATCC 43067 / DSM 2661 / JAL-1 / JCM 10045 / NBRC 100440) (Methanococcus jannaschii).